A 98-amino-acid chain; its full sequence is NADH-ubiquinone oxidoreductase chain 4L (98 aa).

Transmembrane regions (helical) follow at residues 1–21 (MPII…GMLI), 29–49 (SLLC…LMAL), and 58–78 (IVPV…LALL).

This sequence belongs to the complex I subunit 4L family. Core subunit of respiratory chain NADH dehydrogenase (Complex I) which is composed of 45 different subunits.

It is found in the mitochondrion inner membrane. It catalyses the reaction a ubiquinone + NADH + 5 H(+)(in) = a ubiquinol + NAD(+) + 4 H(+)(out). Functionally, core subunit of the mitochondrial membrane respiratory chain NADH dehydrogenase (Complex I) which catalyzes electron transfer from NADH through the respiratory chain, using ubiquinone as an electron acceptor. Part of the enzyme membrane arm which is embedded in the lipid bilayer and involved in proton translocation. The sequence is that of NADH-ubiquinone oxidoreductase chain 4L (MT-ND4L) from Semnopithecus entellus (Northern plains gray langur).